We begin with the raw amino-acid sequence, 92 residues long: Small ribosomal subunit protein uS19 (92 aa).

The protein belongs to the universal ribosomal protein uS19 family.

Its function is as follows. Protein S19 forms a complex with S13 that binds strongly to the 16S ribosomal RNA. This Rhizobium johnstonii (strain DSM 114642 / LMG 32736 / 3841) (Rhizobium leguminosarum bv. viciae) protein is Small ribosomal subunit protein uS19.